The primary structure comprises 229 residues: uncharacterized protein (229 aa).

This is an uncharacterized protein from Bacillus subtilis (strain 168).